Reading from the N-terminus, the 397-residue chain is S-adenosylmethionine synthase (397 aa).

His-16 serves as a coordination point for ATP. Asp-18 is a binding site for Mg(2+). Glu-44 is a K(+) binding site. The L-methionine site is built by Glu-57 and Gln-100. Residues 100–110 form a flexible loop region; sequence QSPDIAQGVDN. ATP is bound by residues 175-177, 242-243, Asp-251, 257-258, Ala-274, and Lys-278; these read DGK, RF, and RK. Residue Asp-251 participates in L-methionine binding. Lys-282 is an L-methionine binding site.

This sequence belongs to the AdoMet synthase family. In terms of assembly, homotetramer; dimer of dimers. Requires Mg(2+) as cofactor. K(+) serves as cofactor.

The protein localises to the cytoplasm. It carries out the reaction L-methionine + ATP + H2O = S-adenosyl-L-methionine + phosphate + diphosphate. The protein operates within amino-acid biosynthesis; S-adenosyl-L-methionine biosynthesis; S-adenosyl-L-methionine from L-methionine: step 1/1. Catalyzes the formation of S-adenosylmethionine (AdoMet) from methionine and ATP. The overall synthetic reaction is composed of two sequential steps, AdoMet formation and the subsequent tripolyphosphate hydrolysis which occurs prior to release of AdoMet from the enzyme. The protein is S-adenosylmethionine synthase of Leifsonia xyli subsp. xyli (strain CTCB07).